The chain runs to 210 residues: Phosphate propanoyltransferase (210 aa).

26-28 (ISN) contributes to the CoA binding site. Zn(2+) is bound by residues H30 and H32. Residues K71 and R78 each contribute to the CoA site. Residue R84 coordinates phosphate. The Zn(2+) site is built by E90, H138, H140, and H186. N193 lines the CoA pocket.

Belongs to the PduL family. It depends on Zn(2+) as a cofactor.

It localises to the bacterial microcompartment. The catalysed reaction is propanoyl-CoA + phosphate = propanoyl phosphate + CoA. The protein operates within polyol metabolism; 1,2-propanediol degradation. In terms of biological role, involved in 1,2-propanediol (1,2-PD) utilization within the bacterial microcompartment (BMC) dedicated to 1,2-PD degradation by catalyzing the conversion of propanoyl-CoA to propanoyl-phosphate. Required for optimal growth on 1,2-PD. CoA is regenerated within the BMC (for use by PduP) via this enzyme, although there must also be cofactor transport across the BMC. Directly targeted to the BMC. Expression of a cosmid containing the full 21-gene pdu operon in E.coli allows E.coli to grow on 1,2-propanediol (1,2-PD) with the appearance of bacterial microcompartments (BMC) in its cytoplasm. Functionally, the 1,2-PD-specific bacterial microcompartment (BMC) concentrates low levels of 1,2-PD catabolic enzymes, concentrates volatile reaction intermediates thus enhancing pathway flux and keeps the level of toxic, mutagenic propionaldehyde low. The sequence is that of Phosphate propanoyltransferase from Citrobacter freundii.